Reading from the N-terminus, the 4115-residue chain is Transcription-associated protein 1 (4115 aa).

Polar residues predominate over residues 1 to 11 (MDPSIPSTSHR). Disordered regions lie at residues 1–21 (MDPS…GVQP) and 543–563 (ESEQ…KKTS). Positions 544–563 (SEQKRNELPTPTKEHTKKTS) are enriched in basic and acidic residues. TPR repeat units follow at residues 1341 to 1374 (LDGL…LLDL) and 1820 to 1853 (QDYD…EVIP). A disordered region spans residues 2678 to 2701 (LEEPEPMEVDQPKNAPAEEPKDNK). Positions 2808 to 3421 (LIEFISSKHE…SNGASKVSKS (614 aa)) constitute an FAT domain. A TPR 3 repeat occupies 2855 to 2888 (IETLESLGALYKELAEFDQYSAIWERRSVFPETM). The PI3K/PI4K catalytic domain occupies 3740–4100 (EPYFEIVMRG…CNSLIIRAKD (361 aa)). The G-loop stretch occupies residues 3746–3752 (VMRGGQV). Residues 3959 to 3967 (NLSPMTPHQ) are catalytic loop. The interval 3979 to 4006 (NPFYRFELGTGQLMDIEHFAHEVPFRLT) is activation loop. One can recognise an FATC domain in the interval 4083 to 4115 (DAKVKKDDCNSLIIRAKDSDNLSRMPPTYHAWF).

It belongs to the PI3/PI4-kinase family. TRA1 subfamily.

The protein resides in the nucleus. Functionally, influences germ cell fate in hermaphrodites. Acts downstream of tra-2 and tra-3 and through the Tip60 histone acetyltransferase complex to regulate germ cell fate decisions. Required for spermatogenesis and embryonic development. Acts with tra-2 to promote expression of fog-3 and control male tail development. Involved in the negative regulation of vulval development. This chain is Transcription-associated protein 1, found in Caenorhabditis briggsae.